Here is a 168-residue protein sequence, read N- to C-terminus: MEPPNLYPVKLYVYDLSKGLARRLSPIMLGKQLEGIWHTSIVVHKDEFFFGSSGISSCTPGGTLLGPPDSVVDVGNTEVTEEIFLEYLSSLGESLFRGEAYNLFEHNCNTFSNEVAQFLTGRKIPSYITDLPSEVLSTPFGQALRPFLDSIQIQPPGGNSVGRPNGQS.

Residues 7-149 (YPVKLYVYDL…FGQALRPFLD (143 aa)) enclose the PPPDE domain. The active site involves histidine 38. The Nuclear export signal 1 signature appears at 83–91 (IFLEYLSSL). The active site involves cysteine 108. The short motif at 139 to 153 (PFGQALRPFLDSIQI) is the Nuclear export signal 2 element.

The protein belongs to the DeSI family. In terms of assembly, homodimer. Interacts with UBQLN4; leading to the export of UBQLN4 from the nucleus.

It is found in the cytoplasm. The protein localises to the nucleus. It carries out the reaction S-hexadecanoyl-L-cysteinyl-[protein] + H2O = L-cysteinyl-[protein] + hexadecanoate + H(+). Its function is as follows. Protease which deconjugates SUMO1, SUMO2 and SUMO3 from some substrate proteins. Has isopeptidase but not SUMO-processing activity. Desumoylates ZBTB46. Collaborates with UBQLN4 in the export of ubiquitinated proteins from the nucleus to the cytoplasm. Exhibits palmitoyl protein thioesterase (S-depalmitoylation) activity towards synthetic substrates 4-methylumbelliferyl-6-S-palmitoyl-beta-D-glucopyranoside and S-depalmitoylation probe 5 (DPP-5). The sequence is that of Desumoylating isopeptidase 1 (Desi1) from Rattus norvegicus (Rat).